We begin with the raw amino-acid sequence, 307 residues long: Universal stress protein A family protein C25B2.10 (307 aa).

The disordered stretch occupies residues 1–63; that stretch reads MSESAPAGSK…RSSMEQPTFR (63 aa). The segment covering 21 to 30 has biased composition (basic and acidic residues); the sequence is PEPRTSKDQQ. A Phosphoserine modification is found at serine 44. Residue threonine 48 is modified to Phosphothreonine. 2 positions are modified to phosphoserine: serine 98 and serine 102.

The protein belongs to the universal stress protein A family.

It is found in the barrier septum. The protein localises to the cell tip. The protein is Universal stress protein A family protein C25B2.10 of Schizosaccharomyces pombe (strain 972 / ATCC 24843) (Fission yeast).